We begin with the raw amino-acid sequence, 518 residues long: MFKIMKDFTEQEKIIVLDFGSQYNQLITRRIREFGVYSELHPHTITVEEMKALNPTGIIFSGGPNSVYDKDAFRADERIFDMGIPILGICYGMQLMTTHFDGKVERAKDREYGKADIHVENPSRLFAGLPTDQVVWMSHGDLVVEEPAGFEVTATSPSCPIAGIADEERLLYGVQFHPEVRHSVYGNELLKNFALNVCGCKGDWTMENFSEVEIAKIQEIVGDKKVLLALSGGVDSSVVGVLIHKAIGDQLTCIFVDHGLLRKGEADQVMATLQGEFNMNIIKVDAKKRFMDKLAGVSDPEQKRKIIGNEFIYVFDDEANKLDGVEFLAQGTLYTDIIESGTATAQTIKSHHNVGGLPEDMQFKLIEPLNTLFKDEVRALGTELGMPDAIVWRQPFPGPGLGIRVLGEITEEKLEIVRDSDYILREEIKKAGLEREIWQYFTALPNIRSVGVMGDGRTYDHTVVVRAVTSIDGMTADWARIPWDVLEKISVRIVNEVDHVNRVVYDITSKPPATVEWE.

The region spanning 13-203 is the Glutamine amidotransferase type-1 domain; sequence KIIVLDFGSQ…ALNVCGCKGD (191 aa). Residue cysteine 90 is the Nucleophile of the active site. Catalysis depends on residues histidine 177 and glutamate 179. The GMPS ATP-PPase domain maps to 204 to 393; the sequence is WTMENFSEVE…LGMPDAIVWR (190 aa). 231–237 provides a ligand contact to ATP; sequence SGGVDSS.

As to quaternary structure, homodimer.

It carries out the reaction XMP + L-glutamine + ATP + H2O = GMP + L-glutamate + AMP + diphosphate + 2 H(+). It participates in purine metabolism; GMP biosynthesis; GMP from XMP (L-Gln route): step 1/1. Functionally, catalyzes the synthesis of GMP from XMP. The protein is GMP synthase [glutamine-hydrolyzing] of Listeria welshimeri serovar 6b (strain ATCC 35897 / DSM 20650 / CCUG 15529 / CIP 8149 / NCTC 11857 / SLCC 5334 / V8).